Reading from the N-terminus, the 194-residue chain is Large ribosomal subunit protein bL9 (194 aa).

Residues 148–194 are disordered; sequence QDEAERQARGENVINSQFEEDRAAEAEAAQDMAEGGAGSFEGDHYEA.

Belongs to the bacterial ribosomal protein bL9 family.

Functionally, binds to the 23S rRNA. The protein is Large ribosomal subunit protein bL9 of Caulobacter vibrioides (strain ATCC 19089 / CIP 103742 / CB 15) (Caulobacter crescentus).